The chain runs to 325 residues: Pseudouridylate synthase TRUB2, mitochondrial (325 aa).

The active-site Nucleophile is D101. Positions 292-325 are disordered; sequence QTEGVSRGNPDREAAEGPIPGPSRGAEGEGELRA.

Belongs to the pseudouridine synthase TruB family.

It is found in the mitochondrion matrix. It carries out the reaction a uridine in mRNA = a pseudouridine in mRNA. It catalyses the reaction uridine(55) in tRNA = pseudouridine(55) in tRNA. Its function is as follows. Minor enzyme contributing to the isomerization of uridine to pseudouridine (pseudouridylation) of specific mitochondrial mRNAs (mt-mRNAs) such as COXI and COXIII mt-mRNAs, modulating the efficiency of mitochondrial protein synthesis without changes in transcript abundance or stability. Also catalyzes pseudouridylation of some tRNAs, including synthesis of pseudouridine(55) from uracil-55, in the psi GC loop of a subset of tRNAs. The sequence is that of Pseudouridylate synthase TRUB2, mitochondrial from Xenopus tropicalis (Western clawed frog).